A 325-amino-acid chain; its full sequence is Glutarate 2-hydroxylase (325 aa).

The Fe cation site is built by His-160, Asp-162, and His-292.

Belongs to the glutarate hydroxylase family. In terms of assembly, homotetramer. Fe(2+) is required as a cofactor.

It carries out the reaction glutarate + 2-oxoglutarate + O2 = (S)-2-hydroxyglutarate + succinate + CO2. The protein operates within amino-acid degradation. In terms of biological role, acts as an alpha-ketoglutarate-dependent dioxygenase catalyzing hydroxylation of glutarate (GA) to L-2-hydroxyglutarate (L2HG). Functions in a L-lysine degradation pathway that proceeds via cadaverine, glutarate and L-2-hydroxyglutarate. This Salmonella newport (strain SL254) protein is Glutarate 2-hydroxylase.